Reading from the N-terminus, the 23-residue chain is Coenzyme PQQ synthesis protein A (23 aa).

A cross-link (pyrroloquinoline quinone (Glu-Tyr)) is located at residues 15–19 (EVTMY).

This sequence belongs to the PqqA family.

Its pathway is cofactor biosynthesis; pyrroloquinoline quinone biosynthesis. Required for coenzyme pyrroloquinoline quinone (PQQ) biosynthesis. PQQ is probably formed by cross-linking a specific glutamate to a specific tyrosine residue and excising these residues from the peptide. This chain is Coenzyme PQQ synthesis protein A, found in Pseudomonas putida (strain W619).